The chain runs to 704 residues: Elongation factor G 1 (704 aa).

Residues 8–291 (ERYRNIGISA…AVIDYLPSPA (284 aa)) enclose the tr-type G domain. GTP-binding positions include 17-24 (AHIDAGKT), 88-92 (DTPGH), and 142-145 (NKMD).

The protein belongs to the TRAFAC class translation factor GTPase superfamily. Classic translation factor GTPase family. EF-G/EF-2 subfamily.

It is found in the cytoplasm. In terms of biological role, catalyzes the GTP-dependent ribosomal translocation step during translation elongation. During this step, the ribosome changes from the pre-translocational (PRE) to the post-translocational (POST) state as the newly formed A-site-bound peptidyl-tRNA and P-site-bound deacylated tRNA move to the P and E sites, respectively. Catalyzes the coordinated movement of the two tRNA molecules, the mRNA and conformational changes in the ribosome. In Burkholderia thailandensis (strain ATCC 700388 / DSM 13276 / CCUG 48851 / CIP 106301 / E264), this protein is Elongation factor G 1.